The primary structure comprises 558 residues: Protein shisa-7 (558 aa).

The signal sequence occupies residues 1–22 (MPALLLLGTVALLASAAGPAGA). At 23 to 189 (RPSNDTSSVA…GGEGPGGSTA (167 aa)) the chain is on the extracellular side. Residue Asn-26 is glycosylated (N-linked (GlcNAc...) asparagine). Disordered stretches follow at residues 53–79 (GGSA…ARAP) and 142–181 (TPPP…GRGG). Over residues 57–77 (AGTSANATKTSPASGTGAAAR) the composition is skewed to low complexity. A compositionally biased stretch (gly residues) spans 148–181 (GGAGGAGGAGGGPGPGQAGWLEGGRAGGAGGRGG). The GRID stretch occupies residues 154–175 (GGAGGGPGPGQAGWLEGGRAGG). Residues 190-210 (YVVCGVISFALAVGVGAKVAF) traverse the membrane as a helical segment. Topologically, residues 211-558 (SKASRAPRAH…RTASKNEVTV (348 aa)) are cytoplasmic. Residues 236–263 (QAGPATRPDRARSSSLTPGLGGPDSMAP) are disordered. A Phosphoserine modification is found at Ser-438. Residues 443–506 (RQSREHLLSP…HHHHALHGSP (64 aa)) are disordered. Positions 453–462 (PRSPALPPDP) are enriched in pro residues. Over residues 466-477 (ASLAASHSNLLL) the composition is skewed to low complexity. The residue at position 532 (Thr-532) is a Phosphothreonine. The PDZ-binding motif lies at 555 to 558 (EVTV).

The protein belongs to the shisa family. Interacts with GABA(A)R (GABA type A receptor) subunits GABRA1, GABRA2 and GABRG2; the interaction is direct. Does not interact with GABRB2 and GABRB3 subunits. Interacts with AMPAR subunits GRIA1, GRIA2 and GRIA3 and AMPAR auxiliary proteins SHISA6 and SHISA7 in heterologous cells. Interacts (via PDZ-binding motif) with DLG4/PSD-95 (via PDZ domain)in heterologous cells; the interaction is direct. In terms of processing, N-glycosylated. In terms of tissue distribution, mainly expressed in neurons. Highly expressed in brain structures including cortex, striatum, olfactory bulb, amygdala hippocampus CA1-3 and dentate gyrus (at protein level).

It localises to the postsynaptic density membrane. Functionally, transmembrane protein that regulates gamma-aminobutyric acid type A receptor (GABA(A)R) trafficking, channel deactivation kinetics and pharmacology, necessary for fast inhibitory transmission in the brain. Enhances the action of benzodiazepine, a primary GABA(A)Rs target drug, in the brain. May affect channel kinetics of AMPA-type glutamate receptors (AMPAR), the brain's main excitatory neurotransmitter, necessary for synaptic hippocampal plasticity, and memory recall. May regulate the induction and maintenance of long-term potentiation at Schaffer collaterals/CA3-CA1 excitatory synapses. This Mus musculus (Mouse) protein is Protein shisa-7.